A 71-amino-acid polypeptide reads, in one-letter code: Large ribosomal subunit protein bL31 (71 aa).

Residues cysteine 16, cysteine 18, cysteine 36, and cysteine 39 each contribute to the Zn(2+) site.

It belongs to the bacterial ribosomal protein bL31 family. Type A subfamily. As to quaternary structure, part of the 50S ribosomal subunit. Zn(2+) serves as cofactor.

Binds the 23S rRNA. This Thermotoga sp. (strain RQ2) protein is Large ribosomal subunit protein bL31.